Consider the following 244-residue polypeptide: Cobalt transport protein CbiM (244 aa).

Residues 1–28 (MKLLKNKKVTFVALLAILAVLSTQSVSA) form the signal peptide. The next 6 membrane-spanning stretches (helical) occupy residues 36–56 (LPLF…VVGL), 71–91 (TMLA…IPSV), 108–128 (FGPS…ALLL), 135–155 (TLGA…YFVY), 166–186 (PVSI…TTSI), and 208–228 (GVFL…TVVL).

This sequence belongs to the CbiM family. As to quaternary structure, forms an energy-coupling factor (ECF) transporter complex composed of an ATP-binding protein (A component, CbiO), a transmembrane protein (T component, CbiQ) and 2 possible substrate-capture proteins (S components, CbiM and CbiN) of unknown stoichimetry.

The protein resides in the cell membrane. The protein operates within cofactor biosynthesis; adenosylcobalamin biosynthesis. Part of the energy-coupling factor (ECF) transporter complex CbiMNOQ involved in cobalt import. The chain is Cobalt transport protein CbiM from Streptococcus sanguinis (strain SK36).